Consider the following 380-residue polypeptide: Beta sliding clamp (380 aa).

This sequence belongs to the beta sliding clamp family. As to quaternary structure, forms a ring-shaped head-to-tail homodimer around DNA which binds and tethers DNA polymerases and other proteins to the DNA. The DNA replisome complex has a single clamp-loading complex (3 tau and 1 each of delta, delta', psi and chi subunits) which binds 3 Pol III cores (1 core on the leading strand and 2 on the lagging strand) each with a beta sliding clamp dimer. Additional proteins in the replisome are other copies of gamma, psi and chi, Ssb, DNA helicase and RNA primase.

It is found in the cytoplasm. Confers DNA tethering and processivity to DNA polymerases and other proteins. Acts as a clamp, forming a ring around DNA (a reaction catalyzed by the clamp-loading complex) which diffuses in an ATP-independent manner freely and bidirectionally along dsDNA. Initially characterized for its ability to contact the catalytic subunit of DNA polymerase III (Pol III), a complex, multichain enzyme responsible for most of the replicative synthesis in bacteria; Pol III exhibits 3'-5' exonuclease proofreading activity. The beta chain is required for initiation of replication as well as for processivity of DNA replication. This chain is Beta sliding clamp (dnaN), found in Mycoplasma pneumoniae (strain ATCC 29342 / M129 / Subtype 1) (Mycoplasmoides pneumoniae).